Consider the following 1194-residue polypeptide: Phosphatidylinositol-3,5-bisphosphate 3-phosphatase MTMR3 (1194 aa).

Serine 4 is modified (phosphoserine). The Myotubularin phosphatase domain maps to 151–572; it reads EHVTSRFKNE…RNLMLWSAVY (422 aa). Residues asparagine 322, asparagine 347, and isoleucine 348 each contribute to the a 1,2-diacyl-sn-glycero-3-phospho-(1D-myo-inositol-3,5-bisphosphate) site. A 1,2-diacyl-sn-glycero-3-phospho-(1D-myo-inositol-3-phosphate)-binding residues include asparagine 322, asparagine 347, and isoleucine 348. Residue cysteine 409 is the Phosphocysteine intermediate of the active site. A 1,2-diacyl-sn-glycero-3-phospho-(1D-myo-inositol-3,5-bisphosphate) contacts are provided by serine 410, aspartate 411, glycine 412, tryptophan 413, aspartate 414, arginine 415, lysine 451, and arginine 455. 6 residues coordinate a 1,2-diacyl-sn-glycero-3-phospho-(1D-myo-inositol-3-phosphate): serine 410, aspartate 411, glycine 412, tryptophan 413, aspartate 414, and arginine 415. Arginine 455 lines the a 1,2-diacyl-sn-glycero-3-phospho-(1D-myo-inositol-3-phosphate) pocket. Positions 583–609 are disordered; it reads DDSCAPYPAPGTSPDEPPLSRLPKTRS. The span at 589–599 shows a compositional bias: pro residues; the sequence is YPAPGTSPDEP. Phosphoserine is present on residues serine 609, serine 629, serine 643, and serine 647. A compositionally biased stretch (basic and acidic residues) spans 693 to 724; sequence TKEESGVEEPTHREHTEVPEVKEEAPLAKESR. Disordered stretches follow at residues 693-731, 852-871, and 876-897; these read TKEE…QGSG, ESGP…RFSG, and PIAP…HRTS. Phosphothreonine is present on threonine 725. Phosphoserine is present on serine 904. 2 disordered regions span residues 932 to 971 and 988 to 1017; these read NKAS…HQLS and KWLN…DGMP. Polar residues predominate over residues 991-1006; the sequence is NSHSGRPSTTNSPEQP. Residues 1025–1058 adopt a coiled-coil conformation; the sequence is QRLRQIESGHQQEVETLKKQVQELKSRLESQYLT. Residue serine 1060 is modified to Phosphoserine. Residues 1115 to 1175 form an FYVE-type zinc finger; that stretch reads DHLAAHCYAC…VCKSCYSSLH (61 aa). 8 residues coordinate Zn(2+): cysteine 1121, cysteine 1124, cysteine 1137, cysteine 1140, cysteine 1145, cysteine 1148, cysteine 1167, and cysteine 1170.

This sequence belongs to the protein-tyrosine phosphatase family. Non-receptor class myotubularin subfamily. In terms of assembly, forms heterodimers with MTMR4 that recruit both CEP55 and PLK1; occurs during early mitosis, regulates the phosphorylation of CEP55 by PLK1 and its recruitment to the midbody where it mediates cell abscission.

It is found in the cytoplasm. The protein resides in the cytosol. Its subcellular location is the membrane. The catalysed reaction is a 1,2-diacyl-sn-glycero-3-phospho-(1D-myo-inositol-3,5-bisphosphate) + H2O = a 1,2-diacyl-sn-glycero-3-phospho-(1D-myo-inositol-5-phosphate) + phosphate. The enzyme catalyses a 1,2-diacyl-sn-glycero-3-phospho-(1D-myo-inositol-3-phosphate) + H2O = a 1,2-diacyl-sn-glycero-3-phospho-(1D-myo-inositol) + phosphate. It carries out the reaction 1,2-dihexadecanoyl-sn-glycero-3-phospho-(1D-myo-inositol-3-phosphate) + H2O = 1,2-dihexadecanoyl-sn-glycero-3-phospho-(1D-myo-inositol) + phosphate. It catalyses the reaction 1,2-dioctanoyl-sn-glycero-3-phospho-(1-D-myo-inositol-3-phosphate) + H2O = 1,2-dioctanoyl-sn-glycero-3-phospho-(1D-myo-inositol) + phosphate. The catalysed reaction is 1,2-dihexadecanoyl-sn-glycero-3-phospho-(1D-myo-inositol-3,5-phosphate) + H2O = 1,2-dihexadecanoyl-sn-glycero-3-phospho-(1D-myo-inositol-5-phosphate) + phosphate. In terms of biological role, lipid phosphatase that specifically dephosphorylates the D-3 position of phosphatidylinositol 3-phosphate and phosphatidylinositol 3,5-bisphosphate, generating phosphatidylinositol and phosphatidylinositol 5-phosphate. Decreases the levels of phosphatidylinositol 3-phosphate, a phospholipid found in cell membranes where it acts as key regulator of both cell signaling and intracellular membrane traffic. Could also have a molecular sequestering/adapter activity and regulate biological processes independently of its phosphatase activity. It includes the regulation of midbody abscission during mitotic cytokinesis. In Rattus norvegicus (Rat), this protein is Phosphatidylinositol-3,5-bisphosphate 3-phosphatase MTMR3.